The chain runs to 486 residues: Galactose-3-O-sulfotransferase 4 (486 aa).

The Cytoplasmic portion of the chain corresponds to 1-18; the sequence is MGPLSPARTLRLWGPRSL. Residues 19 to 39 traverse the membrane as a helical; Signal-anchor for type II membrane protein segment; the sequence is GVALGVFMTIGFALQLLGGPF. The Lumenal portion of the chain corresponds to 40 to 486; it reads QRRLPGLQLR…PLKTSRPLSP (447 aa). Asparagine 374 carries N-linked (GlcNAc...) asparagine glycosylation.

It belongs to the galactose-3-O-sulfotransferase family. Mn(2+) is required as a cofactor. In terms of tissue distribution, expressed mainly in placenta, thymus, testis, ovary, spinal cord, trachea and adrenal gland and at low levels in brain, lung, spleen, prostate, small intestine, colon, stomach thyroid and lymph node.

It is found in the golgi apparatus. The protein localises to the golgi stack membrane. The protein operates within protein modification; carbohydrate sulfation. Its function is as follows. Catalyzes the transfer of sulfate to beta-1,3-linked galactose residues in O-linked glycoproteins. Good substrates include asialofetuin, Gal-beta-1,3-GalNAc and Gal-beta-1,3 (GlcNAc-beta-1,6)GalNAc. The polypeptide is Galactose-3-O-sulfotransferase 4 (GAL3ST4) (Homo sapiens (Human)).